A 954-amino-acid chain; its full sequence is E3 ubiquitin-protein ligase MIB2 (954 aa).

Residues 1–80 (MDLDPYASMQ…AYDLLLYDNA (80 aa)) enclose the MIB/HERC2 1 domain. The segment at 86-138 (HPNIICDCCKKHGIRGMRWKCKMCFDYDLCTQCYMNNKHDLSHAFERYETAHS) adopts a ZZ-type zinc-finger fold. The Zn(2+) site is built by Cys-91, Cys-94, Cys-106, Cys-109, Cys-115, Cys-118, His-124, and His-128. Residues 149-227 (LTRITLKGTF…KVDLKCTVEA (79 aa)) form the MIB/HERC2 2 domain. ANK repeat units lie at residues 464 to 493 (QGRT…TVNL), 497 to 526 (EGDT…GADL), 530 to 559 (AKCT…DVNL), 563 to 591 (HGDT…NIDF), 597 to 626 (QGFN…QLVD), 631 to 661 (DGFT…DVNV), 665 to 694 (RNQT…DVNA), 698 to 726 (DGDT…EMGS), and 766 to 795 (RGKS…EQQV). 2 consecutive RING-type zinc fingers follow at residues 830–865 (CLVC…IKCQ) and 910–943 (CPIC…PICR).

It is found in the cytoplasm. The catalysed reaction is S-ubiquitinyl-[E2 ubiquitin-conjugating enzyme]-L-cysteine + [acceptor protein]-L-lysine = [E2 ubiquitin-conjugating enzyme]-L-cysteine + N(6)-ubiquitinyl-[acceptor protein]-L-lysine.. It functions in the pathway protein modification; protein ubiquitination. E3 ubiquitin-protein ligase that mediates ubiquitination of Delta receptors, which act as ligands of Notch proteins. Positively regulates the Delta-mediated Notch signaling by ubiquitinating the intracellular domain of Delta, leading to endocytosis of Delta receptors. In Gallus gallus (Chicken), this protein is E3 ubiquitin-protein ligase MIB2 (MIB2).